We begin with the raw amino-acid sequence, 516 residues long: MLLLLLLIVVTTLYIFAKLHYTKWERLGFESDKATIPLGSMAKVFHKERPFGLVMSDIYDKCHEKVVGIYLFFKPALLVRDAELARQILTTDFNSFHDRGLYVDEKNDPMSANLFVMEGQSWRTLRMKLAPSFSSGKLKGMFETVDDVAAKLLNHLNERLKDGQSHVLEIKSILTTYAVDIIGSVIFGLEIDSFTHPDNEFRVLSDRLFNPKKSTMLQRFRNLSNFICPPLAKLLSRLGAKDPITYRLRDIVKRTIEFREEKGVVRKDLLQLFIQLRNTGKISDDNDKLWHDVESTAENLKAMSIDMIASNSFLFYIAGSETTAATTSFTIYELAMYPEILKKAQSEVDECLQRHGLKPQGRLTYEAIQDMKYLDLCVMETTRKYPGLPFLNRKCTQDFQVPDTKLTIPKETGIIISLLGIHRDPQYFPQPEDYRPERFADESKDYDPAAYMPFGEGPRHCIAQRMGVMNSKVALAKILANFNIQPMPRQEVEFKFHSAPVLVPVNGLNVGLSKRW.

Residue Cys461 participates in heme binding.

This sequence belongs to the cytochrome P450 family. It depends on heme as a cofactor.

It localises to the endoplasmic reticulum membrane. The protein localises to the microsome membrane. Its function is as follows. Metabolizes pyrethroid insecticides and other xenobiotics. In Musca domestica (House fly), this protein is Cytochrome P450 6d1 (CYP6D1).